The sequence spans 556 residues: Potassium-transporting ATPase potassium-binding subunit (556 aa).

10 helical membrane passes run 5-25 (LAGI…HVPL), 65-85 (SVLA…LVQG), 133-153 (GLAV…IALV), 176-196 (IRIL…GGAI), 249-269 (PTTW…FSLP), 283-303 (YAIV…TLFF), 377-397 (AGLY…GLMV), 415-435 (LAAT…AVAM), 483-503 (ALGL…LALA), and 526-546 (FVGM…LPML).

This sequence belongs to the KdpA family. The system is composed of three essential subunits: KdpA, KdpB and KdpC.

Its subcellular location is the cell membrane. Part of the high-affinity ATP-driven potassium transport (or Kdp) system, which catalyzes the hydrolysis of ATP coupled with the electrogenic transport of potassium into the cytoplasm. This subunit binds the extracellular potassium ions and delivers the ions to the membrane domain of KdpB through an intramembrane tunnel. The polypeptide is Potassium-transporting ATPase potassium-binding subunit (Mycolicibacterium vanbaalenii (strain DSM 7251 / JCM 13017 / BCRC 16820 / KCTC 9966 / NRRL B-24157 / PYR-1) (Mycobacterium vanbaalenii)).